We begin with the raw amino-acid sequence, 366 residues long: Ribosomal RNA large subunit methyltransferase M (366 aa).

S-adenosyl-L-methionine-binding positions include serine 188, 221–224 (CPGG), aspartate 240, aspartate 260, and aspartate 277. Lysine 306 functions as the Proton acceptor in the catalytic mechanism.

The protein belongs to the class I-like SAM-binding methyltransferase superfamily. RNA methyltransferase RlmE family. RlmM subfamily. Monomer.

It is found in the cytoplasm. The catalysed reaction is cytidine(2498) in 23S rRNA + S-adenosyl-L-methionine = 2'-O-methylcytidine(2498) in 23S rRNA + S-adenosyl-L-homocysteine + H(+). Catalyzes the 2'-O-methylation at nucleotide C2498 in 23S rRNA. The sequence is that of Ribosomal RNA large subunit methyltransferase M from Salmonella paratyphi C (strain RKS4594).